Reading from the N-terminus, the 295-residue chain is uncharacterized protein (295 aa).

Residues 1–19 form the signal peptide; the sequence is MHKLLLIITVFFTFNVAQA.

This is an uncharacterized protein from Rickettsia prowazekii (strain Madrid E).